The sequence spans 739 residues: Phosphoribosylformylglycinamidine synthase subunit PurL (739 aa).

Histidine 54 is a catalytic residue. Tyrosine 57 and lysine 96 together coordinate ATP. Glutamate 98 serves as a coordination point for Mg(2+). Residues 99-102 (SHNH) and arginine 121 each bind substrate. Residue histidine 100 is the Proton acceptor of the active site. Position 122 (aspartate 122) interacts with Mg(2+). Glutamine 245 provides a ligand contact to substrate. Aspartate 273 contributes to the Mg(2+) binding site. Residue 317–319 (ESQ) coordinates substrate. ATP is bound by residues aspartate 500 and glycine 537. Asparagine 538 serves as a coordination point for Mg(2+). Serine 540 is a binding site for substrate.

Belongs to the FGAMS family. As to quaternary structure, monomer. Part of the FGAM synthase complex composed of 1 PurL, 1 PurQ and 2 PurS subunits.

The protein resides in the cytoplasm. It carries out the reaction N(2)-formyl-N(1)-(5-phospho-beta-D-ribosyl)glycinamide + L-glutamine + ATP + H2O = 2-formamido-N(1)-(5-O-phospho-beta-D-ribosyl)acetamidine + L-glutamate + ADP + phosphate + H(+). The protein operates within purine metabolism; IMP biosynthesis via de novo pathway; 5-amino-1-(5-phospho-D-ribosyl)imidazole from N(2)-formyl-N(1)-(5-phospho-D-ribosyl)glycinamide: step 1/2. In terms of biological role, part of the phosphoribosylformylglycinamidine synthase complex involved in the purines biosynthetic pathway. Catalyzes the ATP-dependent conversion of formylglycinamide ribonucleotide (FGAR) and glutamine to yield formylglycinamidine ribonucleotide (FGAM) and glutamate. The FGAM synthase complex is composed of three subunits. PurQ produces an ammonia molecule by converting glutamine to glutamate. PurL transfers the ammonia molecule to FGAR to form FGAM in an ATP-dependent manner. PurS interacts with PurQ and PurL and is thought to assist in the transfer of the ammonia molecule from PurQ to PurL. This chain is Phosphoribosylformylglycinamidine synthase subunit PurL, found in Bacillus cereus (strain G9842).